A 166-amino-acid polypeptide reads, in one-letter code: NAD(P)H-quinone oxidoreductase subunit I, chloroplastic (166 aa).

4Fe-4S ferredoxin-type domains follow at residues 55-84 (GRIH…VDWK) and 95-124 (LNYS…MTEE). Cysteine 64, cysteine 67, cysteine 70, cysteine 74, cysteine 104, cysteine 107, cysteine 110, and cysteine 114 together coordinate [4Fe-4S] cluster.

This sequence belongs to the complex I 23 kDa subunit family. As to quaternary structure, NDH is composed of at least 16 different subunits, 5 of which are encoded in the nucleus. Requires [4Fe-4S] cluster as cofactor.

Its subcellular location is the plastid. The protein localises to the chloroplast thylakoid membrane. The enzyme catalyses a plastoquinone + NADH + (n+1) H(+)(in) = a plastoquinol + NAD(+) + n H(+)(out). The catalysed reaction is a plastoquinone + NADPH + (n+1) H(+)(in) = a plastoquinol + NADP(+) + n H(+)(out). Its function is as follows. NDH shuttles electrons from NAD(P)H:plastoquinone, via FMN and iron-sulfur (Fe-S) centers, to quinones in the photosynthetic chain and possibly in a chloroplast respiratory chain. The immediate electron acceptor for the enzyme in this species is believed to be plastoquinone. Couples the redox reaction to proton translocation, and thus conserves the redox energy in a proton gradient. This Hulsea algida (Pacific hulsea) protein is NAD(P)H-quinone oxidoreductase subunit I, chloroplastic.